Consider the following 85-residue polypeptide: Toxin To9 (85 aa).

A signal peptide spans 1 to 19; that stretch reads MNYSTLIAVASLLTAGTES. Residues 21 to 81 form the LCN-type CS-alpha/beta domain; sequence KDGYPVKEGD…AAIKGYGRCR (61 aa). Intrachain disulfides connect C31–C80, C35–C56, C42–C63, and C46–C65. P82 carries the post-translational modification Proline amide.

It belongs to the long (4 C-C) scorpion toxin superfamily. Sodium channel inhibitor family. Alpha subfamily. Expressed by the venom gland.

It localises to the secreted. Alpha toxins bind voltage-independently at site-3 of sodium channels (Nav) and inhibit the inactivation of the activated channels, thereby blocking neuronal transmission. The protein is Toxin To9 of Tityus obscurus (Amazonian scorpion).